The chain runs to 354 residues: Phosphoribosylformylglycinamidine cyclo-ligase (354 aa).

Belongs to the AIR synthase family.

The protein resides in the cytoplasm. It carries out the reaction 2-formamido-N(1)-(5-O-phospho-beta-D-ribosyl)acetamidine + ATP = 5-amino-1-(5-phospho-beta-D-ribosyl)imidazole + ADP + phosphate + H(+). It participates in purine metabolism; IMP biosynthesis via de novo pathway; 5-amino-1-(5-phospho-D-ribosyl)imidazole from N(2)-formyl-N(1)-(5-phospho-D-ribosyl)glycinamide: step 2/2. The chain is Phosphoribosylformylglycinamidine cyclo-ligase from Marinobacter nauticus (strain ATCC 700491 / DSM 11845 / VT8) (Marinobacter aquaeolei).